Here is a 429-residue protein sequence, read N- to C-terminus: Proton extrusion protein PxcA (429 aa).

The disordered stretch occupies residues 139-161 (LNGPEAPQTNGDRPDNKPKVETV). The segment covering 150-161 (DRPDNKPKVETV) has biased composition (basic and acidic residues). Helical transmembrane passes span 211-231 (FLLT…IAIT), 306-326 (AYEN…ILLI), 353-373 (LIIL…WEII), and 389-409 (FNFL…KYWI).

Belongs to the CemA family.

It localises to the cell inner membrane. Its function is as follows. Required for H(+) efflux immediately after light irradiation to form a rapid H(+) concentration gradient across the thylakoid membranes. Together with PxcL, contributes to transient H(+) uptake following dark to light transition. The sequence is that of Proton extrusion protein PxcA from Picosynechococcus sp. (strain ATCC 27264 / PCC 7002 / PR-6) (Agmenellum quadruplicatum).